Here is a 337-residue protein sequence, read N- to C-terminus: MKFSGSHILSVEQFERADIERIFAVADSMEPYALRQKVTRVLEGAILGNMFFEPSTRTRVSFGCAFNLLGGEVRETTGFKSSAIAKGESLYDTARVLSGYSDVICMRHPQEGSVAEFAQASRVPVINGGDGANEHPSQALLDLYTIQKELRDKGRSLDGLRIAMIGDLKHGRTVHSLMRLLGLFANLQVVLVSPEELAMPEEYVELLRGLGHRVDVSSDLANSIGHVDIVYSTRIQEERFGSKEEADLYRGRFRLNQAIYTQFCEPNTVIMHPLPRDSRSDANELDNDLNQNPNLAIFRQTDNGILVRMALFALILDVADQVDKFSRPVNWYHSRTF.

Residues arginine 57 and threonine 58 each contribute to the carbamoyl phosphate site. An L-aspartate-binding site is contributed by lysine 86. Carbamoyl phosphate is bound by residues arginine 107, histidine 135, and glutamine 138. Arginine 172 and arginine 234 together coordinate L-aspartate. Carbamoyl phosphate contacts are provided by leucine 274 and proline 275.

The protein belongs to the aspartate/ornithine carbamoyltransferase superfamily. ATCase family. Heterododecamer (2C3:3R2) of six catalytic PyrB chains organized as two trimers (C3), and six regulatory PyrI chains organized as three dimers (R2).

It carries out the reaction carbamoyl phosphate + L-aspartate = N-carbamoyl-L-aspartate + phosphate + H(+). Its pathway is pyrimidine metabolism; UMP biosynthesis via de novo pathway; (S)-dihydroorotate from bicarbonate: step 2/3. Catalyzes the condensation of carbamoyl phosphate and aspartate to form carbamoyl aspartate and inorganic phosphate, the committed step in the de novo pyrimidine nucleotide biosynthesis pathway. The polypeptide is Aspartate carbamoyltransferase catalytic subunit (Saccharophagus degradans (strain 2-40 / ATCC 43961 / DSM 17024)).